A 121-amino-acid chain; its full sequence is Large ribosomal subunit protein bL19 (121 aa).

The protein belongs to the bacterial ribosomal protein bL19 family.

Its function is as follows. This protein is located at the 30S-50S ribosomal subunit interface and may play a role in the structure and function of the aminoacyl-tRNA binding site. The chain is Large ribosomal subunit protein bL19 from Symbiobacterium thermophilum (strain DSM 24528 / JCM 14929 / IAM 14863 / T).